A 344-amino-acid polypeptide reads, in one-letter code: Phosphoribosylformylglycinamidine cyclo-ligase (344 aa).

Belongs to the AIR synthase family.

The protein localises to the cytoplasm. The catalysed reaction is 2-formamido-N(1)-(5-O-phospho-beta-D-ribosyl)acetamidine + ATP = 5-amino-1-(5-phospho-beta-D-ribosyl)imidazole + ADP + phosphate + H(+). Its pathway is purine metabolism; IMP biosynthesis via de novo pathway; 5-amino-1-(5-phospho-D-ribosyl)imidazole from N(2)-formyl-N(1)-(5-phospho-D-ribosyl)glycinamide: step 2/2. This chain is Phosphoribosylformylglycinamidine cyclo-ligase, found in Neisseria meningitidis serogroup C (strain 053442).